A 278-amino-acid chain; its full sequence is Sulfate transport system permease protein CysT (278 aa).

Helical transmembrane passes span 22–42 (FTWV…FLKS), 67–87 (FGLS…IAWV), 102–122 (FIDL…ATVY), 139–159 (IAFT…PFVV), 188–208 (FWRV…AQGF), 217–237 (SVVI…VLIF), and 246–266 (AGAT…LFVI). The 204-residue stretch at 63-266 (YEVTFGLSLA…LFSLVILFVI (204 aa)) folds into the ABC transmembrane type-1 domain.

Belongs to the binding-protein-dependent transport system permease family. CysTW subfamily. In terms of assembly, the complex is composed of two ATP-binding proteins (CysA), two transmembrane proteins (CysT and CysW) and a solute-binding protein (CysP).

The protein localises to the cell inner membrane. Its function is as follows. Part of the ABC transporter complex CysAWTP (TC 3.A.1.6.1) involved in sulfate/thiosulfate import. Probably responsible for the translocation of the substrate across the membrane. This is Sulfate transport system permease protein CysT (cysT) from Synechococcus elongatus (strain ATCC 33912 / PCC 7942 / FACHB-805) (Anacystis nidulans R2).